The primary structure comprises 147 residues: Interleukin-4 (147 aa).

The N-terminal stretch at 1-24 (MGLSPHLAVTLFCFLICTGNGIHG) is a signal peptide. Residues Cys47 and Cys87 are joined by a disulfide bond. N-linked (GlcNAc...) asparagine glycosylation is found at Asn61, Asn90, and Asn117.

This sequence belongs to the IL-4/IL-13 family.

It localises to the secreted. Participates in at least several B-cell activation processes as well as of other cell types. It is a costimulator of DNA-synthesis. It induces the expression of class II MHC molecules on resting B-cells. It enhances both secretion and cell surface expression of IgE and IgG1. It also regulates the expression of the low affinity Fc receptor for IgE (CD23) on both lymphocytes and monocytes. Positively regulates IL31RA expression in macrophages. Stimulates autophagy in dendritic cells by interfering with mTORC1 signaling and through the induction of RUFY4. The polypeptide is Interleukin-4 (Il4) (Rattus norvegicus (Rat)).